The following is a 421-amino-acid chain: Accessory Sec system protein translocase subunit SecY2 (421 aa).

The next 10 helical transmembrane spans lie at 17–37, 69–89, 102–122, 139–159, 165–185, 204–224, 254–274, 299–319, 358–378, and 383–403; these read LWTS…IPGV, FALG…LTLI, TFLF…IAII, FGAM…LVWL, ILGI…NWPT, VILM…TVVV, PAGG…QYIL, PLGV…FAFI, SFVG…FGII, and TQYA…INII.

It belongs to the SecY/SEC61-alpha family. SecY2 subfamily. As to quaternary structure, component of the accessory SecA2/SecY2 protein translocase complex required to export cell wall proteins. May form heterotrimers with SecE and SecG subunits.

The protein localises to the cell membrane. In terms of biological role, part of the accessory SecA2/SecY2 system specifically required for export of possible cell wall proteins. The central subunit of a protein translocation channel. This chain is Accessory Sec system protein translocase subunit SecY2, found in Leuconostoc gelidum subsp. gasicomitatum (strain DSM 15947 / CCUG 46042 / CECT 5767 / JCM 12535 / LMG 18811 / NBRC 113245 / TB1-10) (Leuconostoc gasicomitatum).